Here is a 348-residue protein sequence, read N- to C-terminus: Inositol 2-dehydrogenase/D-chiro-inositol 3-dehydrogenase (348 aa).

Belongs to the Gfo/Idh/MocA family. In terms of assembly, homotetramer.

It catalyses the reaction myo-inositol + NAD(+) = scyllo-inosose + NADH + H(+). The enzyme catalyses 1D-chiro-inositol + NAD(+) = scyllo-inosine + NADH + H(+). Its pathway is polyol metabolism; myo-inositol degradation into acetyl-CoA; acetyl-CoA from myo-inositol: step 1/7. Its function is as follows. Involved in the oxidation of myo-inositol (MI) and D-chiro-inositol (DCI) to 2-keto-myo-inositol (2KMI or 2-inosose) and 1-keto-D-chiro-inositol (1KDCI), respectively. In Halalkalibacterium halodurans (strain ATCC BAA-125 / DSM 18197 / FERM 7344 / JCM 9153 / C-125) (Bacillus halodurans), this protein is Inositol 2-dehydrogenase/D-chiro-inositol 3-dehydrogenase.